The chain runs to 191 residues: Threonylcarbamoyl-AMP synthase (191 aa).

The YrdC-like domain maps to 7 to 191; that stretch reads QSELNDALKI…FHASTGKRLR (185 aa).

This sequence belongs to the SUA5 family. TsaC subfamily.

Its subcellular location is the cytoplasm. It carries out the reaction L-threonine + hydrogencarbonate + ATP = L-threonylcarbamoyladenylate + diphosphate + H2O. Its function is as follows. Required for the formation of a threonylcarbamoyl group on adenosine at position 37 (t(6)A37) in tRNAs that read codons beginning with adenine. Catalyzes the conversion of L-threonine, HCO(3)(-)/CO(2) and ATP to give threonylcarbamoyl-AMP (TC-AMP) as the acyladenylate intermediate, with the release of diphosphate. The sequence is that of Threonylcarbamoyl-AMP synthase from Psychromonas ingrahamii (strain DSM 17664 / CCUG 51855 / 37).